A 161-amino-acid polypeptide reads, in one-letter code: NADH-quinone oxidoreductase subunit I (161 aa).

4Fe-4S ferredoxin-type domains are found at residues 52–82 (LRRY…IEAK) and 92–121 (TKYD…EGPN). 8 residues coordinate [4Fe-4S] cluster: Cys-62, Cys-65, Cys-68, Cys-72, Cys-101, Cys-104, Cys-107, and Cys-111.

It belongs to the complex I 23 kDa subunit family. In terms of assembly, NDH-1 is composed of 14 different subunits. Subunits NuoA, H, J, K, L, M, N constitute the membrane sector of the complex. The cofactor is [4Fe-4S] cluster.

It localises to the cell inner membrane. It carries out the reaction a quinone + NADH + 5 H(+)(in) = a quinol + NAD(+) + 4 H(+)(out). Functionally, NDH-1 shuttles electrons from NADH, via FMN and iron-sulfur (Fe-S) centers, to quinones in the respiratory chain. The immediate electron acceptor for the enzyme in this species is believed to be ubiquinone. Couples the redox reaction to proton translocation (for every two electrons transferred, four hydrogen ions are translocated across the cytoplasmic membrane), and thus conserves the redox energy in a proton gradient. The chain is NADH-quinone oxidoreductase subunit I from Orientia tsutsugamushi (strain Boryong) (Rickettsia tsutsugamushi).